A 603-amino-acid chain; its full sequence is MTKDIIAYANNETLVDTQSFNNDTNLTPIYFDNSKESLEVIRHSCAHLMAQAIKSLYPEAKFFVGPVIEDGFYYDFRVDSKISEEDLSKIEKKMKELAEAKLDITKYELSKAEVKEKFANDDLKQEVLLRIPDGKVSIYKQGEFEDLCRGPHVPNTKYLRFFKLTRVAGAYLGGDEKREMLTRIYGTAFADKESLNEYLKIIEEAKKRDHRKLGNEMKLFAFDDEIGGGLPIWLSNGAKLRSKLEHLLYKAHRLRGYEPVRGPELLKADAWKISGHYANYKENMYFTQIDEQEYGIKPMNCVGHIKIYQSDVRSYRDLPLKFFEYGVVHRHEKSGVLHGLFRVREFTQDDAHIFCMPSQIKEQVLEILSFVDTLMKAFGFDYEMEISTRPAKAIGDDEIWDIATNALKQALDEQGLKYGIDEGGGAFYGPKIDIKITDALKRKWQCGTIQVDFNLPSRFKLEYTDADNEKKQPVMLHRAILGSFERFIGILIEHCAGELPFFIAPTQVAIVPISQNHHEYAKEIAKKLLELGIDSEVYSKNESLNKKIRTAEKAHVPMILVLGDEEVANKSVALRDRRAKEQKTLTLDEFITLTKEKLSEVRF.

The interval 209–500 is catalytic; it reads DHRKLGNEMK…LIEHCAGELP (292 aa). Residues cysteine 301, histidine 352, and histidine 477 each coordinate Zn(2+).

This sequence belongs to the class-II aminoacyl-tRNA synthetase family. As to quaternary structure, homodimer. It depends on Zn(2+) as a cofactor.

It localises to the cytoplasm. The catalysed reaction is tRNA(Thr) + L-threonine + ATP = L-threonyl-tRNA(Thr) + AMP + diphosphate + H(+). Functionally, catalyzes the attachment of threonine to tRNA(Thr) in a two-step reaction: L-threonine is first activated by ATP to form Thr-AMP and then transferred to the acceptor end of tRNA(Thr). Also edits incorrectly charged L-seryl-tRNA(Thr). The chain is Threonine--tRNA ligase from Campylobacter lari (strain RM2100 / D67 / ATCC BAA-1060).